We begin with the raw amino-acid sequence, 303 residues long: Peptidyl-prolyl isomerase CWC27 (303 aa).

The region spanning 7-153 (ASGKCVLYTT…AEVTIPYFDG (147 aa)) is the PPIase cyclophilin-type domain. 2 disordered regions span residues 155–195 (SGQK…PPLD) and 208–274 (ERLT…TDLA).

The protein belongs to the cyclophilin-type PPIase family. CWC27 subfamily. Associated with the spliceosome.

It is found in the cytoplasm. The protein resides in the nucleus. It catalyses the reaction [protein]-peptidylproline (omega=180) = [protein]-peptidylproline (omega=0). Functionally, PPIases accelerate the folding of proteins. It catalyzes the cis-trans isomerization of proline imidic peptide bonds in oligopeptides. Involved in pre-mRNA splicing. The chain is Peptidyl-prolyl isomerase CWC27 (CWC27) from Eremothecium gossypii (strain ATCC 10895 / CBS 109.51 / FGSC 9923 / NRRL Y-1056) (Yeast).